The sequence spans 175 residues: MASSNMKDETYYIALNMIQNYIIEYNTNKPRKSFVIDSISYDVLKAACKSVIKTNYNEFDIIISRNIDFNVIVTQVLEDKINWGRIITIIAFCAYYSKKVKQDTSPQYYDGIISEAITDAILSKYRSWFIDQDYWNGIRIYKNYSYIFNTASYCIFTASLIIASLAVFKICSFYM.

A BH1 motif is present at residues 75-94 (QVLEDKINWGRIITIIAFCA). Positions 105-120 (SPQYYDGIISEAITDA) match the BH2 motif.

It belongs to the Bcl-2 family. As to quaternary structure, interacts with host BAX; this interaction inhibits BAX oligomerization and subsequent activation. Interacts with host BAK1.

It is found in the host mitochondrion. Functionally, plays a role in the inhibition of host apoptosis by sequestering and inactivating multiple proapoptotic BCL-2 proteins, including BAK1 and BAX. This is Apoptosis regulator Bcl-2 homolog from Vertebrata (FPV).